Here is a 181-residue protein sequence, read N- to C-terminus: Adenylate kinase (181 aa).

7–15 (GVAGVGKTT) lines the ATP pocket.

The protein belongs to the archaeal adenylate kinase family.

It localises to the cytoplasm. It catalyses the reaction AMP + ATP = 2 ADP. The sequence is that of Adenylate kinase (adkA) from Thermoplasma volcanium (strain ATCC 51530 / DSM 4299 / JCM 9571 / NBRC 15438 / GSS1).